Here is a 136-residue protein sequence, read N- to C-terminus: Large ribosomal subunit protein uL16 (136 aa).

The protein belongs to the universal ribosomal protein uL16 family. As to quaternary structure, part of the 50S ribosomal subunit.

Functionally, binds 23S rRNA and is also seen to make contacts with the A and possibly P site tRNAs. The sequence is that of Large ribosomal subunit protein uL16 from Glaesserella parasuis serovar 5 (strain SH0165) (Haemophilus parasuis).